Consider the following 660-residue polypeptide: Bifunctional polymyxin resistance protein ArnA (660 aa).

The segment at 1-304 (MKAVVFAYHD…TLGLVAGAII (304 aa)) is formyltransferase ArnAFT. His104 (proton donor; for formyltransferase activity) is an active-site residue. (6R)-10-formyltetrahydrofolate-binding positions include Arg114 and 136–140 (VSRAD). A dehydrogenase ArnADH region spans residues 314–660 (RRTRVLILGV…KTVELTEPQA (347 aa)). NAD(+) is bound by residues Asp347 and 368-369 (DI). UDP-alpha-D-glucuronate is bound by residues Ala393, Tyr398, and 432–433 (TS). Glu434 (proton acceptor; for decarboxylase activity) is an active-site residue. Residues Arg460, Asn492, 526 to 535 (KLIDGGRQKR), and Tyr613 each bind UDP-alpha-D-glucuronate. The active-site Proton donor; for decarboxylase activity is the Arg619.

In the N-terminal section; belongs to the Fmt family. UDP-L-Ara4N formyltransferase subfamily. The protein in the C-terminal section; belongs to the NAD(P)-dependent epimerase/dehydratase family. UDP-glucuronic acid decarboxylase subfamily. In terms of assembly, homohexamer, formed by a dimer of trimers.

The catalysed reaction is UDP-alpha-D-glucuronate + NAD(+) = UDP-beta-L-threo-pentopyranos-4-ulose + CO2 + NADH. It catalyses the reaction UDP-4-amino-4-deoxy-beta-L-arabinose + (6R)-10-formyltetrahydrofolate = UDP-4-deoxy-4-formamido-beta-L-arabinose + (6S)-5,6,7,8-tetrahydrofolate + H(+). Its pathway is nucleotide-sugar biosynthesis; UDP-4-deoxy-4-formamido-beta-L-arabinose biosynthesis; UDP-4-deoxy-4-formamido-beta-L-arabinose from UDP-alpha-D-glucuronate: step 1/3. It functions in the pathway nucleotide-sugar biosynthesis; UDP-4-deoxy-4-formamido-beta-L-arabinose biosynthesis; UDP-4-deoxy-4-formamido-beta-L-arabinose from UDP-alpha-D-glucuronate: step 3/3. The protein operates within bacterial outer membrane biogenesis; lipopolysaccharide biosynthesis. In terms of biological role, bifunctional enzyme that catalyzes the oxidative decarboxylation of UDP-glucuronic acid (UDP-GlcUA) to UDP-4-keto-arabinose (UDP-Ara4O) and the addition of a formyl group to UDP-4-amino-4-deoxy-L-arabinose (UDP-L-Ara4N) to form UDP-L-4-formamido-arabinose (UDP-L-Ara4FN). The modified arabinose is attached to lipid A and is required for resistance to polymyxin and cationic antimicrobial peptides. The chain is Bifunctional polymyxin resistance protein ArnA from Enterobacter sp. (strain 638).